Reading from the N-terminus, the 447-residue chain is Elongation factor 1-alpha (447 aa).

Residues 5–230 (KTHINIVVIG…DQINEPKRPS (226 aa)) form the tr-type G domain. A G1 region spans residues 14-21 (GHVDSGKS). 14–21 (GHVDSGKS) is a binding site for GTP. K55 is subject to N6,N6-dimethyllysine. The segment at 70-74 (GITID) is G2. K79 is modified (N6,N6,N6-trimethyllysine). The tract at residues 91-94 (DAPG) is G3. Residues 91 to 95 (DAPGH) and 153 to 156 (NKMD) each bind GTP. The G4 stretch occupies residues 153–156 (NKMD). The residue at position 187 (K187) is an N6,N6,N6-trimethyllysine. The tract at residues 194–196 (SGF) is G5. At K261 the chain carries N6-methyllysine. E289 carries the 5-glutamyl glycerylphosphorylethanolamine modification. An N6,N6,N6-trimethyllysine modification is found at K306. Residue E362 is modified to 5-glutamyl glycerylphosphorylethanolamine. K396 is modified (N6,N6,N6-trimethyllysine).

Belongs to the TRAFAC class translation factor GTPase superfamily. Classic translation factor GTPase family. EF-Tu/EF-1A subfamily.

The protein resides in the cytoplasm. This protein promotes the GTP-dependent binding of aminoacyl-tRNA to the A-site of ribosomes during protein biosynthesis. The protein is Elongation factor 1-alpha (REFA1) of Oryza sativa subsp. japonica (Rice).